The following is an 816-amino-acid chain: Acyl-homoserine lactone acylase QuiP (816 aa).

The N-terminal stretch at 1–33 is a signal peptide; sequence MASPALSHFLPRFGVAAAVAGVLSLTGCQTWNA. Ser262 functions as the Nucleophile in the catalytic mechanism.

The protein belongs to the peptidase S45 family. Heterodimer of an alpha subunit and a beta subunit processed from the same precursor.

The protein localises to the periplasm. It catalyses the reaction an N-acyl-L-homoserine lactone + H2O = L-homoserine lactone + a carboxylate. In terms of biological role, catalyzes the deacylation of acyl-homoserine lactone (AHL or acyl-HSL), releasing homoserine lactone (HSL) and the corresponding fatty acid. Possesses a specificity for the degradation of long-chain acyl-HSLs (side chains of seven or more carbons in length). The chain is Acyl-homoserine lactone acylase QuiP (quiP) from Pseudomonas fluorescens (strain Pf0-1).